We begin with the raw amino-acid sequence, 2094 residues long: Protein Ycf2 (2094 aa).

1385–1392 lines the ATP pocket; the sequence is GPPETGRS.

Belongs to the Ycf2 family.

The protein localises to the plastid. It is found in the chloroplast stroma. In terms of biological role, probable ATPase of unknown function. Its presence in a non-photosynthetic plant (Epifagus virginiana) and experiments in tobacco indicate that it has an essential function which is probably not related to photosynthesis. This chain is Protein Ycf2, found in Huperzia lucidula (Shining clubmoss).